We begin with the raw amino-acid sequence, 112 residues long: UPF0060 membrane protein Daro_2632 (112 aa).

4 helical membrane-spanning segments follow: residues 7–27 (VLGL…LPWL), 34–54 (PVWL…LLTL), 59–79 (AGRI…IWLW), and 89–109 (WDLV…LQPA).

It belongs to the UPF0060 family.

The protein resides in the cell inner membrane. This chain is UPF0060 membrane protein Daro_2632, found in Dechloromonas aromatica (strain RCB).